A 197-amino-acid chain; its full sequence is Pyridoxal 5'-phosphate synthase subunit PdxT (197 aa).

Residue 52 to 54 coordinates L-glutamine; it reads GES. The Nucleophile role is filled by Cys84. L-glutamine contacts are provided by residues Arg116 and 143 to 144; that span reads IR. Residues His179 and Glu181 each act as charge relay system in the active site.

This sequence belongs to the glutaminase PdxT/SNO family. As to quaternary structure, in the presence of PdxS, forms a dodecamer of heterodimers. Only shows activity in the heterodimer.

The enzyme catalyses aldehydo-D-ribose 5-phosphate + D-glyceraldehyde 3-phosphate + L-glutamine = pyridoxal 5'-phosphate + L-glutamate + phosphate + 3 H2O + H(+). It carries out the reaction L-glutamine + H2O = L-glutamate + NH4(+). It functions in the pathway cofactor biosynthesis; pyridoxal 5'-phosphate biosynthesis. Its function is as follows. Catalyzes the hydrolysis of glutamine to glutamate and ammonia as part of the biosynthesis of pyridoxal 5'-phosphate. The resulting ammonia molecule is channeled to the active site of PdxS. The chain is Pyridoxal 5'-phosphate synthase subunit PdxT from Ignicoccus hospitalis (strain KIN4/I / DSM 18386 / JCM 14125).